Consider the following 305-residue polypeptide: Protoheme IX farnesyltransferase 1 (305 aa).

Helical transmembrane passes span 30 to 50 (IGIVNSNLVTTFTGMWLAFQF), 59 to 79 (LDVILFTMLGAALIIGGSGAM), 108 to 128 (FVLTIALSFLIVGEILLFAAS), 129 to 149 (FAAGMWGLAGIFAYVVLYSMW), 154 to 176 (HVSNTVVGSISGAIPPIIGFAAV), 180 to 202 (LGPGALALFLIMFAWQPPHFYAL), 232 to 252 (LFWILLLLPLPFLLPELGIGF), 253 to 273 (LTLATALNLGWLILALKGFTA), and 284 to 304 (FIYSLNHMTILFVSIIIFAVF).

This sequence belongs to the UbiA prenyltransferase family. Protoheme IX farnesyltransferase subfamily. Interacts with CtaA.

It localises to the cell membrane. It carries out the reaction heme b + (2E,6E)-farnesyl diphosphate + H2O = Fe(II)-heme o + diphosphate. The protein operates within porphyrin-containing compound metabolism; heme O biosynthesis; heme O from protoheme: step 1/1. Its function is as follows. Converts heme B (protoheme IX) to heme O by substitution of the vinyl group on carbon 2 of heme B porphyrin ring with a hydroxyethyl farnesyl side group. This chain is Protoheme IX farnesyltransferase 1, found in Lysinibacillus sphaericus (strain C3-41).